A 170-amino-acid chain; its full sequence is Protein SprT (170 aa).

The SprT-like domain occupies 22-165 (LQLANQHLGT…RQCGEKLQFI (144 aa)). His-78 serves as a coordination point for Zn(2+). Glu-79 is an active-site residue. Residue His-82 participates in Zn(2+) binding.

It belongs to the SprT family. Zn(2+) serves as cofactor.

Its subcellular location is the cytoplasm. This chain is Protein SprT, found in Yersinia pseudotuberculosis serotype O:1b (strain IP 31758).